The chain runs to 389 residues: Flavin-dependent monooxygenase (389 aa).

FAD is bound by residues 12 to 15 (AGVA), 34 to 35 (EK), Q44, R105, Y267, and D289.

The protein belongs to the aromatic-ring hydroxylase family. Requires FAD as cofactor.

It carries out the reaction a tetracycline + NADPH + O2 + H(+) = a (1S,10aS)-3-(CONH2)-1-(Me2N)-3,3a,4,6-(HO)4-2,5-dioxo-1H,10aH,11H,11aH-cyclopenta[b]anthracene + CO + NADP(+) + H2O. It catalyses the reaction 7-chlorotetracycline + NADPH + O2 + H(+) = (1S,10S,10aS)-3-(CONH2)-9-Cl-1-(Me2N)-3,3a,4,10-(HO)4-10-Me-2,5-dioxo-1H,10aH,11H,11aH-cyclopenta[b]anthracen-6-olate + CO + NADP(+) + H2O. Its activity is regulated as follows. Inhibited by anhydrotetracycline. Functionally, an FAD-requiring monooxygenase active on tetracycline antibiotic and some of its derivatives, which leads to their inactivation. Expression in E.coli confers high resistance to tetracycline and oxytetracycline, does not confer resistance to minocycline or tigecycline. The reaction requires NADPH. Expression in L.pneumophila confers resistance to tetracycline. Degrades and confers resistance to tetracycline and chlortetracycline. In Legionella longbeachae serogroup 1 (strain NSW150), this protein is Flavin-dependent monooxygenase (tet(56)).